The primary structure comprises 201 residues: Glycine-rich protein 23 (201 aa).

A signal peptide spans 1–24 (MGLISGKVCVFIFVFALVAEFSFG). 21 repeat units span residues 62-67 (GLGGGG), 68-73 (GLGGGG), 74-79 (GLGGGG), 80-85 (GLGGGG), 86-91 (GLGGGG), 92-97 (GLGGGG), 98-103 (GLGGGS), 104-109 (GLGGGG), 110-115 (GLGGGS), 116-121 (GLGGGG), 122-129 (GLGGGGGG), 130-135 (GLGGGG), 136-143 (GLGGGAGG), 144-151 (GYGGGAGG), 152-157 (GLGGGG), 158-163 (GIGGGG), 164-169 (GFGGGG), 170-175 (GGGFGG), 176-182 (GAGGGFG), 184-189 (GIGGGG), and 190-194 (GLGGG). The tract at residues 62–194 (GLGGGGGLGG…IGGGGGLGGG (133 aa)) is 21 X 6 AA approximate tandem repeats of G-L-G-G-G-G, Gly-rich.

The polypeptide is Glycine-rich protein 23 (Arabidopsis thaliana (Mouse-ear cress)).